A 145-amino-acid polypeptide reads, in one-letter code: D-aminoacyl-tRNA deacylase (145 aa).

A Gly-cisPro motif, important for rejection of L-amino acids motif is present at residues 137–138; that stretch reads GP.

The protein belongs to the DTD family. As to quaternary structure, homodimer.

It localises to the cytoplasm. It carries out the reaction glycyl-tRNA(Ala) + H2O = tRNA(Ala) + glycine + H(+). It catalyses the reaction a D-aminoacyl-tRNA + H2O = a tRNA + a D-alpha-amino acid + H(+). An aminoacyl-tRNA editing enzyme that deacylates mischarged D-aminoacyl-tRNAs. Also deacylates mischarged glycyl-tRNA(Ala), protecting cells against glycine mischarging by AlaRS. Acts via tRNA-based rather than protein-based catalysis; rejects L-amino acids rather than detecting D-amino acids in the active site. By recycling D-aminoacyl-tRNA to D-amino acids and free tRNA molecules, this enzyme counteracts the toxicity associated with the formation of D-aminoacyl-tRNA entities in vivo and helps enforce protein L-homochirality. This chain is D-aminoacyl-tRNA deacylase, found in Serratia proteamaculans (strain 568).